We begin with the raw amino-acid sequence, 339 residues long: Large ribosomal subunit protein uL10 (339 aa).

Residues 305–339 are disordered; sequence TQPQQEEKVEEAEEEEEEEEASEEDALAGLGALFG. Acidic residues predominate over residues 312–330; that stretch reads KVEEAEEEEEEEEASEEDA.

Belongs to the universal ribosomal protein uL10 family. Part of the 50S ribosomal subunit. Forms part of the ribosomal stalk which helps the ribosome interact with GTP-bound translation factors. Forms a heptameric L10(L12)2(L12)2(L12)2 complex, where L10 forms an elongated spine to which the L12 dimers bind in a sequential fashion.

In terms of biological role, forms part of the ribosomal stalk, playing a central role in the interaction of the ribosome with GTP-bound translation factors. This is Large ribosomal subunit protein uL10 from Thermococcus onnurineus (strain NA1).